Here is a 352-residue protein sequence, read N- to C-terminus: S-adenosylmethionine:tRNA ribosyltransferase-isomerase (352 aa).

Belongs to the QueA family. As to quaternary structure, monomer.

The protein resides in the cytoplasm. It carries out the reaction 7-aminomethyl-7-carbaguanosine(34) in tRNA + S-adenosyl-L-methionine = epoxyqueuosine(34) in tRNA + adenine + L-methionine + 2 H(+). The protein operates within tRNA modification; tRNA-queuosine biosynthesis. Transfers and isomerizes the ribose moiety from AdoMet to the 7-aminomethyl group of 7-deazaguanine (preQ1-tRNA) to give epoxyqueuosine (oQ-tRNA). The sequence is that of S-adenosylmethionine:tRNA ribosyltransferase-isomerase from Allorhizobium ampelinum (strain ATCC BAA-846 / DSM 112012 / S4) (Agrobacterium vitis (strain S4)).